A 370-amino-acid chain; its full sequence is Cytochrome b (370 aa).

Helical transmembrane passes span 25 to 45 (FGSMLLACSTLQVLTGFFLAV), 69 to 90 (WLMQNLHAIGASMFFICIYIHI), 105 to 125 (WLSGTMLLIMLMATAFFGYVL), and 170 to 190 (FFALHFILPFGIISLSSLHVI). The heme b site is built by His-75 and His-89. Heme b is bound by residues His-174 and His-188. His-193 serves as a coordination point for a ubiquinone. 4 consecutive transmembrane segments (helical) span residues 218 to 238 (YKDLLMLTIMTILLLLIVSFS), 280 to 300 (LGGALALTMSIIILMTVPFTH), 312 to 332 (FMQMTFWMFAATFLVITWTAT), and 339 to 358 (FTLIGQMASMLYFLFFISNP).

It belongs to the cytochrome b family. The cytochrome bc1 complex contains 3 respiratory subunits (MT-CYB, CYC1 and UQCRFS1), 2 core proteins (UQCRC1 and UQCRC2) and probably 6 low-molecular weight proteins. It depends on heme b as a cofactor.

Its subcellular location is the mitochondrion inner membrane. Functionally, component of the ubiquinol-cytochrome c reductase complex (complex III or cytochrome b-c1 complex) that is part of the mitochondrial respiratory chain. The b-c1 complex mediates electron transfer from ubiquinol to cytochrome c. Contributes to the generation of a proton gradient across the mitochondrial membrane that is then used for ATP synthesis. In Eunectes murinus (Green anaconda), this protein is Cytochrome b (MT-CYB).